The following is a 275-amino-acid chain: MGIRFYKPYTPGTRNRSMAEFDQITETKPEKHLTSWIPRSKGRNNRGIITSRHRGGGHKRLYRNIDFKRNKLGILGQVATIEYDPNRNARIAKVHYQDGEKRYILYPRGLQLGQTILSNFNAPITIGNSLPLHQIPLGTEIHNIELKPGSGGQLARAAGSVAQLVAKEGNFVTLRLPSGEIRLVSKSCWATIGQVGNVEQMNLTVGKAGKSRWLGRRPKVRGVVMNPVDHPHGGGEGRAPIGRSRPVTPWGRPALGQRTRNATKYSRNLIIRRRK.

The disordered stretch occupies residues 223 to 255 (VVMNPVDHPHGGGEGRAPIGRSRPVTPWGRPAL).

Belongs to the universal ribosomal protein uL2 family. Part of the 50S ribosomal subunit.

It localises to the plastid. It is found in the chloroplast. This is Large ribosomal subunit protein uL2c (rpl2) from Pleurastrum terricola (Filamentous green alga).